Consider the following 128-residue polypeptide: Protein Wnt-8 (128 aa).

Residue serine 1 is the site of O-palmitoleoyl serine attachment. 2 disulfide bridges follow: cysteine 69–cysteine 109 and cysteine 85–cysteine 102. N-linked (GlcNAc...) asparagine glycosylation occurs at asparagine 72.

It belongs to the Wnt family. Post-translationally, palmitoleoylation is required for efficient binding to frizzled receptors. Depalmitoleoylation leads to Wnt signaling pathway inhibition. In terms of processing, proteolytic processing by tiki1 and tiki2 promotes oxidation and formation of large disulfide-bond oligomers, leading to inactivation of wnt8.

It localises to the secreted. Its subcellular location is the extracellular space. The protein resides in the extracellular matrix. Its function is as follows. Ligand for members of the frizzled family of seven transmembrane receptors. Probable developmental protein. May be a signaling molecule which affects the development of discrete regions of tissues. Is likely to signal over only few cell diameters. In Evasterias troschelii (Mottled sea star), this protein is Protein Wnt-8 (WNT-8).